A 178-amino-acid chain; its full sequence is Ribosome maturation factor RimM (178 aa).

Positions 101 to 178 constitute a PRC barrel domain; the sequence is DGEYYWYQLQ…EMKVEWDADF (78 aa).

The protein belongs to the RimM family. In terms of assembly, binds ribosomal protein uS19.

The protein resides in the cytoplasm. Its function is as follows. An accessory protein needed during the final step in the assembly of 30S ribosomal subunit, possibly for assembly of the head region. Essential for efficient processing of 16S rRNA. May be needed both before and after RbfA during the maturation of 16S rRNA. It has affinity for free ribosomal 30S subunits but not for 70S ribosomes. This Pseudomonas fluorescens (strain ATCC BAA-477 / NRRL B-23932 / Pf-5) protein is Ribosome maturation factor RimM.